We begin with the raw amino-acid sequence, 469 residues long: Neuraminidase (469 aa).

Over 1-9 (MNPNQKIIT) the chain is Intravirion. The helical transmembrane segment at 10–30 (IGSVSLTIATICFLMQIAILV) threads the bilayer. An involved in apical transport and lipid raft association region spans residues 11-33 (GSVSLTIATICFLMQIAILVTTV). Over 31–469 (TTVTLHFKQY…DGADINLMPI (439 aa)) the chain is Virion surface. The segment at 36 to 88 (HFKQYECDSPANKQVMPCEPIIIERNITEIVYLTNTTIEKEICPKLVEYRNWS) is hypervariable stalk region. Residues Asn-61, Asn-70, and Asn-86 are each glycosylated (N-linked (GlcNAc...) asparagine; by host). The tract at residues 91–469 (QCKITGFAPF…DGADINLMPI (379 aa)) is head of neuraminidase. 8 disulfide bridges follow: Cys-92/Cys-417, Cys-124/Cys-129, Cys-183/Cys-230, Cys-232/Cys-237, Cys-278/Cys-291, Cys-280/Cys-289, Cys-318/Cys-337, and Cys-421/Cys-447. Arg-118 serves as a coordination point for substrate. N-linked (GlcNAc...) asparagine; by host glycosylation occurs at Asn-146. Asp-151 (proton donor/acceptor) is an active-site residue. Arg-152 provides a ligand contact to substrate. Asn-200 and Asn-234 each carry an N-linked (GlcNAc...) asparagine; by host glycan. 276-277 (EE) lines the substrate pocket. Arg-292 contributes to the substrate binding site. Ca(2+) contacts are provided by Asp-293, Gly-297, and Asp-324. Arg-371 is a substrate binding site. Asn-402 carries an N-linked (GlcNAc...) asparagine; by host glycan. Residue Tyr-406 is the Nucleophile of the active site.

This sequence belongs to the glycosyl hydrolase 34 family. As to quaternary structure, homotetramer. Ca(2+) is required as a cofactor. In terms of processing, N-glycosylated.

It localises to the virion membrane. It is found in the host apical cell membrane. The enzyme catalyses Hydrolysis of alpha-(2-&gt;3)-, alpha-(2-&gt;6)-, alpha-(2-&gt;8)- glycosidic linkages of terminal sialic acid residues in oligosaccharides, glycoproteins, glycolipids, colominic acid and synthetic substrates.. Its activity is regulated as follows. Inhibited by the neuraminidase inhibitors zanamivir (Relenza) and oseltamivir (Tamiflu). These drugs interfere with the release of progeny virus from infected cells and are effective against all influenza strains. Resistance to neuraminidase inhibitors is quite rare. Catalyzes the removal of terminal sialic acid residues from viral and cellular glycoconjugates. Cleaves off the terminal sialic acids on the glycosylated HA during virus budding to facilitate virus release. Additionally helps virus spread through the circulation by further removing sialic acids from the cell surface. These cleavages prevent self-aggregation and ensure the efficient spread of the progeny virus from cell to cell. Otherwise, infection would be limited to one round of replication. Described as a receptor-destroying enzyme because it cleaves a terminal sialic acid from the cellular receptors. May facilitate viral invasion of the upper airways by cleaving the sialic acid moieties on the mucin of the airway epithelial cells. Likely to plays a role in the budding process through its association with lipid rafts during intracellular transport. May additionally display a raft-association independent effect on budding. Plays a role in the determination of host range restriction on replication and virulence. Sialidase activity in late endosome/lysosome traffic seems to enhance virus replication. This Influenza A virus (strain A/Beijing/39/1975 H3N2) protein is Neuraminidase.